A 342-amino-acid polypeptide reads, in one-letter code: Ribosomal RNA small subunit methyltransferase C (342 aa).

Belongs to the methyltransferase superfamily. RsmC family. Monomer.

The protein resides in the cytoplasm. It catalyses the reaction guanosine(1207) in 16S rRNA + S-adenosyl-L-methionine = N(2)-methylguanosine(1207) in 16S rRNA + S-adenosyl-L-homocysteine + H(+). Specifically methylates the guanine in position 1207 of 16S rRNA in the 30S particle. In Salmonella paratyphi B (strain ATCC BAA-1250 / SPB7), this protein is Ribosomal RNA small subunit methyltransferase C.